The sequence spans 383 residues: Hydroxymethylglutaryl-CoA synthase (383 aa).

Asp29 lines the (3S)-3-hydroxy-3-methylglutaryl-CoA pocket. The active-site Proton donor/acceptor is Glu79. Residues Cys111, Thr152, Ser201, His233, Lys242, Asn275, and Ser308 each contribute to the (3S)-3-hydroxy-3-methylglutaryl-CoA site. Cys111 serves as the catalytic Acyl-thioester intermediate. Catalysis depends on His233, which acts as the Proton donor/acceptor.

It belongs to the thiolase-like superfamily. HMG-CoA synthase family. In terms of assembly, homodimer.

The catalysed reaction is acetoacetyl-CoA + acetyl-CoA + H2O = (3S)-3-hydroxy-3-methylglutaryl-CoA + CoA + H(+). It functions in the pathway metabolic intermediate biosynthesis; (R)-mevalonate biosynthesis; (R)-mevalonate from acetyl-CoA: step 2/3. With respect to regulation, is sensitive to feedback substrate inhibition by acetoacetyl-CoA. Is inactivated by hymeglusin, which also blocks the growth of E.faecalis, indicating the critical role that the mevalonate pathway plays in isoprenoid biosynthesis. Its function is as follows. Catalyzes the condensation of acetyl-CoA with acetoacetyl-CoA to form 3-hydroxy-3-methylglutaryl-CoA (HMG-CoA). Functions in the mevalonate (MVA) pathway leading to isopentenyl diphosphate (IPP), a key precursor for the biosynthesis of isoprenoid compounds. The chain is Hydroxymethylglutaryl-CoA synthase (mvaS) from Enterococcus faecalis (Streptococcus faecalis).